We begin with the raw amino-acid sequence, 377 residues long: Phosphoserine aminotransferase (377 aa).

Residue Arg43 coordinates L-glutamate. The pyridoxal 5'-phosphate site is built by Trp105, Thr164, Asp189, and Gln212. Lys213 carries the N6-(pyridoxal phosphate)lysine modification. 254-255 contacts pyridoxal 5'-phosphate; it reads NT.

This sequence belongs to the class-V pyridoxal-phosphate-dependent aminotransferase family. SerC subfamily. As to quaternary structure, homodimer. The cofactor is pyridoxal 5'-phosphate.

It is found in the cytoplasm. It catalyses the reaction O-phospho-L-serine + 2-oxoglutarate = 3-phosphooxypyruvate + L-glutamate. The catalysed reaction is 4-(phosphooxy)-L-threonine + 2-oxoglutarate = (R)-3-hydroxy-2-oxo-4-phosphooxybutanoate + L-glutamate. It participates in amino-acid biosynthesis; L-serine biosynthesis; L-serine from 3-phospho-D-glycerate: step 2/3. It functions in the pathway cofactor biosynthesis; pyridoxine 5'-phosphate biosynthesis; pyridoxine 5'-phosphate from D-erythrose 4-phosphate: step 3/5. Functionally, catalyzes the reversible conversion of 3-phosphohydroxypyruvate to phosphoserine and of 3-hydroxy-2-oxo-4-phosphonooxybutanoate to phosphohydroxythreonine. The sequence is that of Phosphoserine aminotransferase from Bordetella bronchiseptica (strain ATCC BAA-588 / NCTC 13252 / RB50) (Alcaligenes bronchisepticus).